Reading from the N-terminus, the 289-residue chain is ATP synthase gamma chain (289 aa).

Belongs to the ATPase gamma chain family. In terms of assembly, F-type ATPases have 2 components, CF(1) - the catalytic core - and CF(0) - the membrane proton channel. CF(1) has five subunits: alpha(3), beta(3), gamma(1), delta(1), epsilon(1). CF(0) has three main subunits: a, b and c.

It is found in the cell inner membrane. Functionally, produces ATP from ADP in the presence of a proton gradient across the membrane. The gamma chain is believed to be important in regulating ATPase activity and the flow of protons through the CF(0) complex. The sequence is that of ATP synthase gamma chain from Aromatoleum aromaticum (strain DSM 19018 / LMG 30748 / EbN1) (Azoarcus sp. (strain EbN1)).